Here is a 470-residue protein sequence, read N- to C-terminus: ATP synthase subunit beta (470 aa).

157–164 (GGAGVGKT) serves as a coordination point for ATP.

The protein belongs to the ATPase alpha/beta chains family. F-type ATPases have 2 components, CF(1) - the catalytic core - and CF(0) - the membrane proton channel. CF(1) has five subunits: alpha(3), beta(3), gamma(1), delta(1), epsilon(1). CF(0) has three main subunits: a(1), b(2) and c(9-12). The alpha and beta chains form an alternating ring which encloses part of the gamma chain. CF(1) is attached to CF(0) by a central stalk formed by the gamma and epsilon chains, while a peripheral stalk is formed by the delta and b chains.

It localises to the cell inner membrane. It carries out the reaction ATP + H2O + 4 H(+)(in) = ADP + phosphate + 5 H(+)(out). Its function is as follows. Produces ATP from ADP in the presence of a proton gradient across the membrane. The catalytic sites are hosted primarily by the beta subunits. The chain is ATP synthase subunit beta from Citrifermentans bemidjiense (strain ATCC BAA-1014 / DSM 16622 / JCM 12645 / Bem) (Geobacter bemidjiensis).